The following is a 248-amino-acid chain: tRNA (guanine-N(1)-)-methyltransferase (248 aa).

Residues Gly117 and 137 to 142 contribute to the S-adenosyl-L-methionine site; that span reads LGDFVL.

Belongs to the RNA methyltransferase TrmD family. Homodimer.

The protein resides in the cytoplasm. It carries out the reaction guanosine(37) in tRNA + S-adenosyl-L-methionine = N(1)-methylguanosine(37) in tRNA + S-adenosyl-L-homocysteine + H(+). Functionally, specifically methylates guanosine-37 in various tRNAs. The sequence is that of tRNA (guanine-N(1)-)-methyltransferase from Herminiimonas arsenicoxydans.